The sequence spans 97 residues: uncharacterized protein (97 aa).

This is an uncharacterized protein from Bacillus subtilis (strain 168).